Reading from the N-terminus, the 1597-residue chain is Transmembrane protein 131-like (1597 aa).

An N-terminal signal peptide occupies residues 1–40; it reads MAGLRRPQSGAYRRTAAAVNLLLGVFQVLLSCCRPGGAQG. At 41–869 the chain is on the extracellular side; sequence QAFEPLPNVV…VVPGPSWEES (829 aa). 4 N-linked (GlcNAc...) asparagine glycosylation sites follow: N343, N593, N709, and N846. The segment at 696-916 is required for Wnt-signaling inhibition and LRP6 degradation; that stretch reads DYGKVTSLIL…QNGSSSSQQN (221 aa). The chain crosses the membrane as a helical span at residues 870 to 890; it reads FWRLTVFFVSLSLLGVILIAF. At 891-1597 the chain is on the cytoplasmic side; it reads QQAQYILMEF…SRDSSYCGNM (707 aa). Low complexity predominate over residues 907–917; it reads QNGSSSSQQNG. 3 disordered regions span residues 907-928, 1096-1240, and 1252-1322; these read QNGS…SHPH, AELK…EQRL, and DGAG…SDCD. Over residues 1213 to 1222 the composition is skewed to basic residues; it reads RPCRRNKKRA. Positions 1223-1239 are enriched in low complexity; sequence SAQASSSPRPSEQSEQR. Over residues 1269–1290 the composition is skewed to basic and acidic residues; sequence PERREEDSYYQKSEKKCADKFC. The span at 1291–1319 shows a compositional bias: low complexity; sequence SDSSSDCGSSSGSVRASRGSWGSWSSSSS.

It belongs to the TMEM131 family.

It is found in the cell membrane. Its subcellular location is the endoplasmic reticulum. It localises to the cytoplasm. In terms of biological role, in its membrane-associated form, antagonizes canonical Wnt signaling by triggering lysosome-dependent degradation of Wnt-activated LRP6. Regulates thymocyte proliferation. In Mus musculus (Mouse), this protein is Transmembrane protein 131-like.